A 106-amino-acid polypeptide reads, in one-letter code: MTASIAQQKIRIRLKAFDRRMLDLSCDKIIQTADTTSASAIGPIPLPTKRKIYCVLRSPHVDKDSREHFETRTHRRIIDIYSPSAKTIDALMKLDLPSGVDIEVKL.

The protein belongs to the universal ribosomal protein uS10 family. In terms of assembly, part of the 30S ribosomal subunit.

In terms of biological role, involved in the binding of tRNA to the ribosomes. The polypeptide is Small ribosomal subunit protein uS10 (Prochlorococcus marinus (strain MIT 9301)).